The primary structure comprises 414 residues: Esterase FrsA (414 aa).

Belongs to the FrsA family.

It carries out the reaction a carboxylic ester + H2O = an alcohol + a carboxylate + H(+). Its function is as follows. Catalyzes the hydrolysis of esters. This is Esterase FrsA from Enterobacter sp. (strain 638).